Here is a 95-residue protein sequence, read N- to C-terminus: Co-chaperonin GroES (95 aa).

Belongs to the GroES chaperonin family. As to quaternary structure, heptamer of 7 subunits arranged in a ring. Interacts with the chaperonin GroEL.

Its subcellular location is the cytoplasm. Its function is as follows. Together with the chaperonin GroEL, plays an essential role in assisting protein folding. The GroEL-GroES system forms a nano-cage that allows encapsulation of the non-native substrate proteins and provides a physical environment optimized to promote and accelerate protein folding. GroES binds to the apical surface of the GroEL ring, thereby capping the opening of the GroEL channel. The polypeptide is Co-chaperonin GroES (Francisella tularensis subsp. holarctica (strain FTNF002-00 / FTA)).